The sequence spans 279 residues: Acetyl-coenzyme A carboxylase carboxyl transferase subunit beta (279 aa).

The CoA carboxyltransferase N-terminal domain maps to 23-279 (LWWKCESCGA…LSQILGHLSS (257 aa)). Zn(2+) is bound by residues C27, C30, C46, and C49. A C4-type zinc finger spans residues 27–49 (CESCGAMLHKKQVEDHFYTCCEC).

It belongs to the AccD/PCCB family. In terms of assembly, acetyl-CoA carboxylase is a heterohexamer composed of biotin carboxyl carrier protein (AccB), biotin carboxylase (AccC) and two subunits each of ACCase subunit alpha (AccA) and ACCase subunit beta (AccD). It depends on Zn(2+) as a cofactor.

It localises to the cytoplasm. It catalyses the reaction N(6)-carboxybiotinyl-L-lysyl-[protein] + acetyl-CoA = N(6)-biotinyl-L-lysyl-[protein] + malonyl-CoA. It functions in the pathway lipid metabolism; malonyl-CoA biosynthesis; malonyl-CoA from acetyl-CoA: step 1/1. Component of the acetyl coenzyme A carboxylase (ACC) complex. Biotin carboxylase (BC) catalyzes the carboxylation of biotin on its carrier protein (BCCP) and then the CO(2) group is transferred by the transcarboxylase to acetyl-CoA to form malonyl-CoA. The protein is Acetyl-coenzyme A carboxylase carboxyl transferase subunit beta of Prosthecochloris aestuarii (strain DSM 271 / SK 413).